A 622-amino-acid chain; its full sequence is MSLDITKYPVLAQADTPDELRQLPQGVLPKLADELRSYLLQSVGISSGHFASGLGTVELTVALHYVYNTPFDRLIWDVGHQAYPHKILTGRRDKMPTIRQKGGIHPFPWREESEYDTFSVGHSGTSISAALAMAVAAEKEQAGRKVVAVIGDGAMTGGMVFEAMNHAGDLHNDMLVVLNDNEMSISENVGALNNHLAQLMSGRLYTTIRENSKKVLKGMPVIKEMAKRTEEHLKGMVVPGTMFEELGFNYIGPIDGHDVDALVETLRNMRNLSGPQILHIMTKKGRGYEPAEKDPIGWHAVPKFDPSTFAKPAAKPANPTFSQVFGRWLCDMAQKDDKVLGITPAMREGSGMVEFSQRFPNQYFDAAIAEQHAVTLAAGFACEGYKPVLAIYSTFLQRGYDQLIHDVALQKLPVIFAIDRGGIVGPDGPTHQGAFDLSYMRAIPNMVIMAPSDENECRQMLYTGYCYNEGPTAIRYPRGSATGEPQVETMTAYEIGKGLIKREGKKIAILNFGTTLASASQAAEALDATLADMRFVKPLDVELVKQLATSHDLLVTVEENAIMGGAGSGVLELLQQLKLPMPVLNIGLPDEFIKHGECGEILAELQLDGPGIEAQIRAYLAD.

Residues His80 and 121-123 (GHS) each bind thiamine diphosphate. Asp152 is a Mg(2+) binding site. Thiamine diphosphate-binding positions include 153-154 (GA), Asn181, Tyr288, and Glu370. Asn181 serves as a coordination point for Mg(2+).

It belongs to the transketolase family. DXPS subfamily. Homodimer. It depends on Mg(2+) as a cofactor. The cofactor is thiamine diphosphate.

The enzyme catalyses D-glyceraldehyde 3-phosphate + pyruvate + H(+) = 1-deoxy-D-xylulose 5-phosphate + CO2. Its pathway is metabolic intermediate biosynthesis; 1-deoxy-D-xylulose 5-phosphate biosynthesis; 1-deoxy-D-xylulose 5-phosphate from D-glyceraldehyde 3-phosphate and pyruvate: step 1/1. In terms of biological role, catalyzes the acyloin condensation reaction between C atoms 2 and 3 of pyruvate and glyceraldehyde 3-phosphate to yield 1-deoxy-D-xylulose-5-phosphate (DXP). This chain is 1-deoxy-D-xylulose-5-phosphate synthase, found in Shewanella loihica (strain ATCC BAA-1088 / PV-4).